A 144-amino-acid chain; its full sequence is Small ribosomal subunit protein bS6 (144 aa).

The interval 95 to 144 (ELEEGPSAMMQSKSRDDRPRRGEGDDRPRRDDREDRPRRDREPRRMEGGE) is disordered. Residues 107–144 (KSRDDRPRRGEGDDRPRRDDREDRPRRDREPRRMEGGE) are compositionally biased toward basic and acidic residues.

It belongs to the bacterial ribosomal protein bS6 family.

In terms of biological role, binds together with bS18 to 16S ribosomal RNA. This Paramagnetospirillum magneticum (strain ATCC 700264 / AMB-1) (Magnetospirillum magneticum) protein is Small ribosomal subunit protein bS6.